Here is a 356-residue protein sequence, read N- to C-terminus: D-alanine--D-alanine ligase (356 aa).

Residues 134-339 (KQLFEHRGLP…YPELITKLIE (206 aa)) form the ATP-grasp domain. An ATP-binding site is contributed by 167–222 (NDKLNYPVFVKPANLGSSIGISKCSNEVELKEGIKEAFQFDRKLVIEQGVNAREIE). Residues aspartate 293, glutamate 306, and asparagine 308 each coordinate Mg(2+).

Belongs to the D-alanine--D-alanine ligase family. The cofactor is Mg(2+). Mn(2+) serves as cofactor.

Its subcellular location is the cytoplasm. The enzyme catalyses 2 D-alanine + ATP = D-alanyl-D-alanine + ADP + phosphate + H(+). Its pathway is cell wall biogenesis; peptidoglycan biosynthesis. Its function is as follows. Cell wall formation. The sequence is that of D-alanine--D-alanine ligase from Staphylococcus aureus (strain MRSA252).